A 427-amino-acid chain; its full sequence is Peptidase B (427 aa).

Residues K195 and D200 each coordinate Mn(2+). Residue K207 is part of the active site. Positions 218, 277, and 279 each coordinate Mn(2+). R281 is an active-site residue.

Belongs to the peptidase M17 family. In terms of assembly, homohexamer. Mn(2+) serves as cofactor.

It is found in the cytoplasm. The enzyme catalyses Release of an N-terminal amino acid, Xaa, from a peptide or arylamide. Xaa is preferably Glu or Asp but may be other amino acids, including Leu, Met, His, Cys and Gln.. Functionally, probably plays an important role in intracellular peptide degradation. The sequence is that of Peptidase B from Escherichia coli (strain SE11).